The following is an 885-amino-acid chain: Probable alpha-glucosidase Os06g0675700 (885 aa).

The N-terminal stretch at 1–33 (MMGSPPAPPARRLGALAVFLLALFLAAPWGVDC) is a signal peptide. N-linked (GlcNAc...) asparagine glycosylation is found at asparagine 195, asparagine 378, and asparagine 397. Catalysis depends on residues aspartate 443 and glutamate 446. N-linked (GlcNAc...) asparagine glycans are attached at residues asparagine 467 and asparagine 477. The active-site Proton donor is aspartate 540. Residues asparagine 576 and asparagine 844 are each glycosylated (N-linked (GlcNAc...) asparagine).

It belongs to the glycosyl hydrolase 31 family.

The catalysed reaction is Hydrolysis of terminal, non-reducing (1-&gt;4)-linked alpha-D-glucose residues with release of alpha-D-glucose.. The chain is Probable alpha-glucosidase Os06g0675700 from Oryza sativa subsp. japonica (Rice).